The sequence spans 872 residues: Alanine--tRNA ligase (872 aa).

Residues H567, H571, C669, and H673 each contribute to the Zn(2+) site.

Belongs to the class-II aminoacyl-tRNA synthetase family. Requires Zn(2+) as cofactor.

Its subcellular location is the cytoplasm. The enzyme catalyses tRNA(Ala) + L-alanine + ATP = L-alanyl-tRNA(Ala) + AMP + diphosphate. Catalyzes the attachment of alanine to tRNA(Ala) in a two-step reaction: alanine is first activated by ATP to form Ala-AMP and then transferred to the acceptor end of tRNA(Ala). Also edits incorrectly charged Ser-tRNA(Ala) and Gly-tRNA(Ala) via its editing domain. The sequence is that of Alanine--tRNA ligase from Streptococcus pneumoniae (strain CGSP14).